The sequence spans 160 residues: Transcription factor 12 (160 aa).

Positions 1–58 are disordered; that stretch reads NKEKDENLHEPPSSDDMKSDDESSQKDIKVSSRGRTSTNEDEDLNPEQKIEREKERRM. Over residues 15 to 30 the composition is skewed to basic and acidic residues; that stretch reads DDMKSDDESSQKDIKV. At S19 the chain carries Phosphoserine. K29 is covalently cross-linked (Glycyl lysine isopeptide (Lys-Gly) (interchain with G-Cter in SUMO2)). A Phosphothreonine modification is found at T36. Residue S37 is modified to Phosphoserine. Positions 46–58 are enriched in basic and acidic residues; that stretch reads PEQKIEREKERRM. Residues 55-108 enclose the bHLH domain; sequence ERRMANNARERLRVRDINEAFKELGRMCQLHLKSEKPQTKLLILHQAVAVILSL. Residues K87 and K131 each participate in a glycyl lysine isopeptide (Lys-Gly) (interchain with G-Cter in SUMO2) cross-link. Residues 110-133 are class A specific domain; it reads QQVRERNLNPKAACLKRREEEKVS. Residues 132-160 form a disordered region; it reads VSVVSAEPPTTLPGTHPGLSETTNPMGHM. The span at 139–150 shows a compositional bias: low complexity; that stretch reads PPTTLPGTHPGL. Residues 151-160 are compositionally biased toward polar residues; sequence SETTNPMGHM.

Efficient DNA binding requires dimerization with another bHLH protein. Forms homo- or heterooligomers with myogenin, E12 and ITF2 proteins. Interacts with PTF1A. Interacts with RUNX1T1. Interacts with NEUROD2. Interacts with BHLHA9.

It is found in the nucleus. Its function is as follows. Transcriptional regulator. Involved in the initiation of neuronal differentiation. Activates transcription by binding to the E box (5'-CANNTG-3'). May be involved in the functional network that regulates the development of the GnRH axis. This chain is Transcription factor 12 (TCF12), found in Papio hamadryas (Hamadryas baboon).